Consider the following 744-residue polypeptide: Catalase-peroxidase (744 aa).

Positions 1–22 (MSPRARRCTDRCARMSERSMNA) are cleaved as a signal peptide. The tryptophyl-tyrosyl-methioninium (Trp-Tyr) (with M-260) cross-link spans 114–234 (WHSAGTYRLA…LGATEMGLIY (121 aa)). H115 acts as the Proton acceptor in catalysis. A cross-link (tryptophyl-tyrosyl-methioninium (Tyr-Met) (with W-114)) is located at residues 234–260 (YVNPEGPDRNGDPISAAKFIRETFARM). Position 275 (H275) interacts with heme b.

Belongs to the peroxidase family. Peroxidase/catalase subfamily. As to quaternary structure, homodimer or homotetramer. Requires heme b as cofactor. Post-translationally, formation of the three residue Trp-Tyr-Met cross-link is important for the catalase, but not the peroxidase activity of the enzyme.

It catalyses the reaction H2O2 + AH2 = A + 2 H2O. The enzyme catalyses 2 H2O2 = O2 + 2 H2O. In terms of biological role, bifunctional enzyme with both catalase and broad-spectrum peroxidase activity. The chain is Catalase-peroxidase from Azorhizobium caulinodans (strain ATCC 43989 / DSM 5975 / JCM 20966 / LMG 6465 / NBRC 14845 / NCIMB 13405 / ORS 571).